The primary structure comprises 612 residues: RNA polymerase sigma factor RpoD (612 aa).

Residues 191–206 (QQNNEEDEENNQEDHE) show a composition bias toward acidic residues. The disordered stretch occupies residues 191–210 (QQNNEEDEENNQEDHEDDHS). The segment at 378 to 448 (MVEANLRLVI…TRSIADQART (71 aa)) is sigma-70 factor domain-2. The Interaction with polymerase core subunit RpoC motif lies at 402–405 (DLIQ). The tract at residues 457-533 (ETINKLNRIS…DTTLELPLDS (77 aa)) is sigma-70 factor domain-3. The tract at residues 546-599 (VLSGLTAREAKVLRMRFGIDMNTDHTLEEVGKQFDVTRERIRQIEAKALRKLRH) is sigma-70 factor domain-4. A DNA-binding region (H-T-H motif) is located at residues 572 to 591 (LEEVGKQFDVTRERIRQIEA).

This sequence belongs to the sigma-70 factor family. RpoD/SigA subfamily. Interacts transiently with the RNA polymerase catalytic core.

The protein resides in the cytoplasm. Functionally, sigma factors are initiation factors that promote the attachment of RNA polymerase to specific initiation sites and are then released. This sigma factor is the primary sigma factor during exponential growth. In Buchnera aphidicola subsp. Acyrthosiphon pisum (strain APS) (Acyrthosiphon pisum symbiotic bacterium), this protein is RNA polymerase sigma factor RpoD.